The primary structure comprises 351 residues: DNA polymerase IV (351 aa).

The 182-residue stretch at 4 to 185 folds into the UmuC domain; it reads IIHIDMDCFF…LPLAKIPGVG (182 aa). Mg(2+)-binding residues include Asp-8 and Asp-103. Residue Glu-104 is part of the active site.

The protein belongs to the DNA polymerase type-Y family. As to quaternary structure, monomer. Mg(2+) serves as cofactor.

The protein resides in the cytoplasm. It catalyses the reaction DNA(n) + a 2'-deoxyribonucleoside 5'-triphosphate = DNA(n+1) + diphosphate. In terms of biological role, poorly processive, error-prone DNA polymerase involved in untargeted mutagenesis. Copies undamaged DNA at stalled replication forks, which arise in vivo from mismatched or misaligned primer ends. These misaligned primers can be extended by PolIV. Exhibits no 3'-5' exonuclease (proofreading) activity. May be involved in translesional synthesis, in conjunction with the beta clamp from PolIII. This Salmonella paratyphi A (strain ATCC 9150 / SARB42) protein is DNA polymerase IV.